Here is a 315-residue protein sequence, read N- to C-terminus: piRNA biogenesis protein EXD1 (315 aa).

Positions 141–228 (IYIFDIQVMQ…ECLTNYLGLQ (88 aa)) constitute a 3'-5' exonuclease domain.

It belongs to the EXD1 family. As to quaternary structure, homodimer. Component of the PET complex, at least composed of EXD1, SIWI, TDRD12 and piRNAs.

The protein resides in the cytoplasm. RNA-binding component of the PET complex, a multiprotein complex required for the processing of piRNAs during spermatogenesis. The piRNA metabolic process mediates the repression of transposable elements during meiosis by forming complexes composed of piRNAs and Piwi proteins and governs the methylation and subsequent repression of transposable elements, preventing their mobilization, which is essential for the germline integrity. The PET complex is required during the secondary piRNAs metabolic process for the PIWIL2 slicing-triggered loading of PIWIL4 piRNAs. In the PET complex, EXD1 probably acts as an RNA adapter. EXD1 is an inactive exonuclease. This is piRNA biogenesis protein EXD1 from Bombyx mori (Silk moth).